Here is a 257-residue protein sequence, read N- to C-terminus: MLAKRIIPCLDVKDGQVVKGVQFRNHEIIGDIVPLAQRYAEEGADELVFYDITASSDGRVVDKSWVARVAEVIDIPFCVAGGIKTAEDAAKILEFGADKVSINSPALANPELITELADKFGVQCIVVGIDSYFDKDTGKYQVYQFTGDEERTKATKWETKDWVQEVQKRGAGEIVLNMMNQDGVRNGYDLEQLNMVREVCYVPLIASGGAGEMVHFADAYKKTNVDGALAASVFHKQIINIGELKDYLAEQDVEVRR.

Catalysis depends on residues Asp11 and Asp130.

The protein belongs to the HisA/HisF family. Heterodimer of HisH and HisF.

The protein resides in the cytoplasm. It catalyses the reaction 5-[(5-phospho-1-deoxy-D-ribulos-1-ylimino)methylamino]-1-(5-phospho-beta-D-ribosyl)imidazole-4-carboxamide + L-glutamine = D-erythro-1-(imidazol-4-yl)glycerol 3-phosphate + 5-amino-1-(5-phospho-beta-D-ribosyl)imidazole-4-carboxamide + L-glutamate + H(+). The protein operates within amino-acid biosynthesis; L-histidine biosynthesis; L-histidine from 5-phospho-alpha-D-ribose 1-diphosphate: step 5/9. IGPS catalyzes the conversion of PRFAR and glutamine to IGP, AICAR and glutamate. The HisF subunit catalyzes the cyclization activity that produces IGP and AICAR from PRFAR using the ammonia provided by the HisH subunit. This Aliivibrio fischeri (strain ATCC 700601 / ES114) (Vibrio fischeri) protein is Imidazole glycerol phosphate synthase subunit HisF.